A 445-amino-acid polypeptide reads, in one-letter code: Argininosuccinate synthase (445 aa).

Residues 17–25 (AFSGGLDTS) and Ala-43 each bind ATP. Tyr-99 serves as a coordination point for L-citrulline. ATP contacts are provided by Gly-129 and Thr-131. Residues Thr-131, Asn-135, and Asp-136 each contribute to the L-aspartate site. Asn-135 serves as a coordination point for L-citrulline. Residue Asp-136 coordinates ATP. L-citrulline contacts are provided by Arg-139 and Ser-192. Asp-194 provides a ligand contact to ATP. Thr-201, Glu-203, and Glu-280 together coordinate L-citrulline.

It belongs to the argininosuccinate synthase family. Type 2 subfamily. Homotetramer.

The protein resides in the cytoplasm. The enzyme catalyses L-citrulline + L-aspartate + ATP = 2-(N(omega)-L-arginino)succinate + AMP + diphosphate + H(+). Its pathway is amino-acid biosynthesis; L-arginine biosynthesis; L-arginine from L-ornithine and carbamoyl phosphate: step 2/3. This is Argininosuccinate synthase from Bordetella bronchiseptica (strain ATCC BAA-588 / NCTC 13252 / RB50) (Alcaligenes bronchisepticus).